A 57-amino-acid chain; its full sequence is Ribosome modulation factor (57 aa).

The tract at residues 1 to 28 (MKRQKRDRLERAQSQGYKAGLNGRSHDE) is disordered.

This sequence belongs to the ribosome modulation factor family.

The protein localises to the cytoplasm. During stationary phase, converts 70S ribosomes to an inactive dimeric form (100S ribosomes). The protein is Ribosome modulation factor of Vibrio cholerae serotype O1 (strain MJ-1236).